The following is a 209-amino-acid chain: Uracil phosphoribosyltransferase (209 aa).

5-phospho-alpha-D-ribose 1-diphosphate-binding positions include R79, R104, and 131–139 (DPMLATGVS). Uracil contacts are provided by residues I194 and 199–201 (GDA). D200 is a binding site for 5-phospho-alpha-D-ribose 1-diphosphate.

This sequence belongs to the UPRTase family. Mg(2+) serves as cofactor.

The catalysed reaction is UMP + diphosphate = 5-phospho-alpha-D-ribose 1-diphosphate + uracil. The protein operates within pyrimidine metabolism; UMP biosynthesis via salvage pathway; UMP from uracil: step 1/1. With respect to regulation, allosterically activated by GTP. Its function is as follows. Catalyzes the conversion of uracil and 5-phospho-alpha-D-ribose 1-diphosphate (PRPP) to UMP and diphosphate. This is Uracil phosphoribosyltransferase from Thermotoga maritima (strain ATCC 43589 / DSM 3109 / JCM 10099 / NBRC 100826 / MSB8).